A 187-amino-acid chain; its full sequence is HTH-type transcriptional regulator NfxB (187 aa).

The H-T-H motif DNA-binding region spans 26–45 (LKELAEAAGVSKATLHRFCG).

Its function is as follows. Confers resistance to guinolones. May negatively regulate the expression of genes that are associated with cell permeability to drugs. This is HTH-type transcriptional regulator NfxB (nfxB) from Pseudomonas aeruginosa (strain ATCC 15692 / DSM 22644 / CIP 104116 / JCM 14847 / LMG 12228 / 1C / PRS 101 / PAO1).